The primary structure comprises 118 residues: Large ribosomal subunit protein bL20 (118 aa).

The protein belongs to the bacterial ribosomal protein bL20 family.

Binds directly to 23S ribosomal RNA and is necessary for the in vitro assembly process of the 50S ribosomal subunit. It is not involved in the protein synthesizing functions of that subunit. This is Large ribosomal subunit protein bL20 from Ectopseudomonas mendocina (strain ymp) (Pseudomonas mendocina).